A 445-amino-acid polypeptide reads, in one-letter code: Methylphloroacetophenone oxidase (445 aa).

A helical transmembrane segment spans residues 25-45; sequence VLSIALIGVACAISIRSILYV. N51 is a glycosylation site (N-linked (GlcNAc...) asparagine).

This sequence belongs to the cytochrome P450 family.

The protein localises to the membrane. It functions in the pathway secondary metabolite biosynthesis. Functionally, methylphloroacetophenone oxidase; part of the gene cluster that mediates the biosynthesis of usnic acid, a dibenzofuran lichen product possessing a broad spectrum of biological activities. Two genes, mpas and mpao, comprise the usnic acid biosynthetic gene cluster with a single post-PKS enzyme, the methylphloracetophenone oxidase (mpao). The methylphloroacetophenone synthase (mpas) is a non-reducing polyketide synthase that produces methylphloracetophenone from acetate via a methylated tetraketide intermediate. The methylphloroacetophenone oxidase then carries out the oxidative dimerization of methylphloracetophenone to usnic acid. This Cladonia uncialis (Cup lichen) protein is Methylphloroacetophenone oxidase.